A 372-amino-acid chain; its full sequence is MNSGIDLEMSFTQGVQNLGLSHELAHLLWIPLPMLLVLVSAVIGVLVTVWLERKISAAAQQRIGPEYAGALGILQPMADGLKLLVKEDIIPARADSVLFTVGPILVLVPVILSWLIVPFGQNLLISNVGIGIFLWIALSSIQPIGLLMSGYSSNNKYSLLGGLRAAAQSISYEIPLALAVLAIVMMSNSLSTVDIVEQQNTAGFLSWNIWRQPVGFIIFWICALAECERLPFDLPEAEEELVAGYQTEYSGMKFALFYLAGYINLVLSALLVSVLYLGGWGFPISIDWFSSFIGLSIDNPLVQIIAASLGIVMTILKAYLLVFLAILLRWTTPRVRIDQLLDLGWKFLLPISLVNLLVTASLKLAFPMTFGG.

8 helical membrane-spanning segments follow: residues 27-47 (LLWIPLPMLLVLVSAVIGVLV), 97-117 (VLFTVGPILVLVPVILSWLIV), 128-148 (VGIGIFLWIALSSIQPIGLLM), 166-186 (AAQSISYEIPLALAVLAIVMM), 204-224 (FLSWNIWRQPVGFIIFWICAL), 266-286 (VLSALLVSVLYLGGWGFPISI), 308-328 (SLGIVMTILKAYLLVFLAILL), and 347-367 (FLLPISLVNLLVTASLKLAFP).

This sequence belongs to the complex I subunit 1 family. NDH-1 is composed of at least 11 different subunits.

The protein localises to the cellular thylakoid membrane. The enzyme catalyses a plastoquinone + NADH + (n+1) H(+)(in) = a plastoquinol + NAD(+) + n H(+)(out). It catalyses the reaction a plastoquinone + NADPH + (n+1) H(+)(in) = a plastoquinol + NADP(+) + n H(+)(out). In terms of biological role, NDH-1 shuttles electrons from an unknown electron donor, via FMN and iron-sulfur (Fe-S) centers, to quinones in the respiratory and/or the photosynthetic chain. The immediate electron acceptor for the enzyme in this species is believed to be plastoquinone. Couples the redox reaction to proton translocation, and thus conserves the redox energy in a proton gradient. The protein is NAD(P)H-quinone oxidoreductase subunit 1 of Prochlorococcus marinus (strain NATL2A).